A 121-amino-acid chain; its full sequence is Small ribosomal subunit protein bS16m (121 aa).

Belongs to the bacterial ribosomal protein bS16 family. As to quaternary structure, component of the mitochondrial small ribosomal subunit (mt-SSU). Mature yeast 74S mitochondrial ribosomes consist of a small (37S) and a large (54S) subunit. The 37S small subunit contains a 15S ribosomal RNA (15S mt-rRNA) and 34 different proteins. The 54S large subunit contains a 21S rRNA (21S mt-rRNA) and 46 different proteins.

The protein resides in the mitochondrion. Its function is as follows. Component of the mitochondrial ribosome (mitoribosome), a dedicated translation machinery responsible for the synthesis of mitochondrial genome-encoded proteins, including at least some of the essential transmembrane subunits of the mitochondrial respiratory chain. The mitoribosomes are attached to the mitochondrial inner membrane and translation products are cotranslationally integrated into the membrane. This Saccharomyces cerevisiae (strain ATCC 204508 / S288c) (Baker's yeast) protein is Small ribosomal subunit protein bS16m (MRPS16).